Reading from the N-terminus, the 425-residue chain is 3-isopropylmalate dehydratase large subunit (425 aa).

3 residues coordinate [4Fe-4S] cluster: Cys-305, Cys-365, and Cys-368.

It belongs to the aconitase/IPM isomerase family. LeuC type 2 subfamily. Heterodimer of LeuC and LeuD. Requires [4Fe-4S] cluster as cofactor.

It catalyses the reaction (2R,3S)-3-isopropylmalate = (2S)-2-isopropylmalate. It functions in the pathway amino-acid biosynthesis; L-leucine biosynthesis; L-leucine from 3-methyl-2-oxobutanoate: step 2/4. Its function is as follows. Catalyzes the isomerization between 2-isopropylmalate and 3-isopropylmalate, via the formation of 2-isopropylmaleate. This Clostridioides difficile (strain 630) (Peptoclostridium difficile) protein is 3-isopropylmalate dehydratase large subunit.